Here is a 98-residue protein sequence, read N- to C-terminus: DNA-binding protein Fis (98 aa).

Positions Gln-74–Lys-93 form a DNA-binding region, H-T-H motif.

The protein belongs to the transcriptional regulatory Fis family. As to quaternary structure, homodimer.

Functionally, activates ribosomal RNA transcription. Plays a direct role in upstream activation of rRNA promoters. The sequence is that of DNA-binding protein Fis from Sodalis glossinidius (strain morsitans).